Here is a 681-residue protein sequence, read N- to C-terminus: MTTMNPFLVQSTLPYLAPHFDQIANHHYRPAFDEGMQQKRAEIAAIALNPQMPDFNNTILALEQSGELLTRVTSVFFAMTAAHTNDELQRLDEQFSAELAELANDIYLNGELFARVDAVWQRRESLGLDSESIRLVEVIHQRFVLAGAKLAQADKAKLKVLNTEAATLTSQFNQRLLAANKSGGLVVNDIAQLAGMSEQEIALAAEAAREKGLDNKWLIPLLNTTQQPALAEMRDRATREKLFIAGWTRAEKNDANDTRAIIQRLVEIRAQQATLLGFPHYAAWKIADQMAKTPEAALNFMREIVPAARQRASDELASIQAVIDKQQGGFSAQPWDWAFYAEQVRREKFDLDEAQLKPYFELNTVLNEGVFWTANQLFGIKFVERFDIPVYHPDVRVWEIFDHNGVGLALFYGDFFARDSKSGGAWMGNFVEQSTLNKTHPVIYNVCNYQKPAAGEPALLLWDDVITLFHEFGHTLHGLFARQRYATLSGTNTPRDFVEFPSQINEHWATHPQVFARYARHYQSGAAMPDELQQKMRNASLFNKGYEMSELLSAALLDMRWHCLEENEAMQDVDDFELRALVAENMDLPAIPPRYRSSYFAHIFGGGYAAGYYAYLWTQMLADDGYQWFVEQGGLTRENGLRFREAILSRGNSEDLERLYRQWRGKAPKIMPMLQHRGLNI.

His470 contributes to the Zn(2+) binding site. Glu471 is an active-site residue. Residues His474 and His477 each coordinate Zn(2+).

Belongs to the peptidase M3 family. Requires Zn(2+) as cofactor.

The protein resides in the cytoplasm. It carries out the reaction Hydrolysis of unblocked, C-terminal dipeptides from oligopeptides, with broad specificity. Does not hydrolyze bonds in which P1' is Pro, or both P1 and P1' are Gly.. Stimulated by Mn(2+), Mg(2+), Co(2+) and Ca(2+), inhibited by Cu(2+), Ni(2+), Zn(2+), chymostatin and 1,10-phenanthroline. Its function is as follows. Removes dipeptides from the C-termini of N-blocked tripeptides, tetrapeptides and larger peptides. This Escherichia coli (strain K12) protein is Dipeptidyl carboxypeptidase.